Reading from the N-terminus, the 342-residue chain is UDP-3-O-acylglucosamine N-acyltransferase (342 aa).

The Proton acceptor role is filled by H253.

This sequence belongs to the transferase hexapeptide repeat family. LpxD subfamily. Homotrimer.

The catalysed reaction is a UDP-3-O-[(3R)-3-hydroxyacyl]-alpha-D-glucosamine + a (3R)-hydroxyacyl-[ACP] = a UDP-2-N,3-O-bis[(3R)-3-hydroxyacyl]-alpha-D-glucosamine + holo-[ACP] + H(+). It functions in the pathway bacterial outer membrane biogenesis; LPS lipid A biosynthesis. Catalyzes the N-acylation of UDP-3-O-acylglucosamine using 3-hydroxyacyl-ACP as the acyl donor. Is involved in the biosynthesis of lipid A, a phosphorylated glycolipid that anchors the lipopolysaccharide to the outer membrane of the cell. The sequence is that of UDP-3-O-acylglucosamine N-acyltransferase from Rickettsia canadensis (strain McKiel).